Here is a 392-residue protein sequence, read N- to C-terminus: MVTINTALCKNSTRVMILGSGELGKEIAIECQRLGIEVISVDSYSNAPAMHVSHRHHVIDMLNPKEIKRCINLEHPDFIVPEIEAISTNALIELEKNGYNIVPSAKTIHITMNRKLIRVLVSKKLNILTSEYQFASSFDELKIKTKVIGYPCLIKPIMSSSGKGQSVIYNEKELRHSWEKSQTYGRTSLGEVIIEKIIPFDFEITLLVVNSVDGMHFCLPIGHRQEKGDYQESWQPHKMDNVIFEKAKKISKKIVSYLGGYGIFGVEFFIYKDKVIFSEISPRPHDTGMVTLISQNLSEFALHVRSFLKLPIGKIRQYGPSSSVVICGNELYGNKISFSNIECINTNQQIRIFSKPNIKGYRRLGVILDQDETIERSLRKAKKTASKILIKT.

N(1)-(5-phospho-beta-D-ribosyl)glycinamide-binding positions include 22–23 (EL) and E82. ATP contacts are provided by residues R114, K155, 160–165 (SSGKGQ), 195–198 (EKII), and E203. The ATP-grasp domain occupies 119–308 (VLVSKKLNIL…EFALHVRSFL (190 aa)). The Mg(2+) site is built by E267 and E279. Residues D286, K355, and 362 to 363 (RR) contribute to the N(1)-(5-phospho-beta-D-ribosyl)glycinamide site.

This sequence belongs to the PurK/PurT family. As to quaternary structure, homodimer.

The enzyme catalyses N(1)-(5-phospho-beta-D-ribosyl)glycinamide + formate + ATP = N(2)-formyl-N(1)-(5-phospho-beta-D-ribosyl)glycinamide + ADP + phosphate + H(+). It functions in the pathway purine metabolism; IMP biosynthesis via de novo pathway; N(2)-formyl-N(1)-(5-phospho-D-ribosyl)glycinamide from N(1)-(5-phospho-D-ribosyl)glycinamide (formate route): step 1/1. Involved in the de novo purine biosynthesis. Catalyzes the transfer of formate to 5-phospho-ribosyl-glycinamide (GAR), producing 5-phospho-ribosyl-N-formylglycinamide (FGAR). Formate is provided by PurU via hydrolysis of 10-formyl-tetrahydrofolate. This Wigglesworthia glossinidia brevipalpis protein is Formate-dependent phosphoribosylglycinamide formyltransferase.